Here is a 169-residue protein sequence, read N- to C-terminus: Peptide methionine sulfoxide reductase MsrA (169 aa).

The active site involves C13.

It belongs to the MsrA Met sulfoxide reductase family.

It catalyses the reaction L-methionyl-[protein] + [thioredoxin]-disulfide + H2O = L-methionyl-(S)-S-oxide-[protein] + [thioredoxin]-dithiol. The catalysed reaction is [thioredoxin]-disulfide + L-methionine + H2O = L-methionine (S)-S-oxide + [thioredoxin]-dithiol. Its function is as follows. Has an important function as a repair enzyme for proteins that have been inactivated by oxidation. Catalyzes the reversible oxidation-reduction of methionine sulfoxide in proteins to methionine. The chain is Peptide methionine sulfoxide reductase MsrA from Mycolicibacterium vanbaalenii (strain DSM 7251 / JCM 13017 / BCRC 16820 / KCTC 9966 / NRRL B-24157 / PYR-1) (Mycobacterium vanbaalenii).